The primary structure comprises 768 residues: Polyadenylate-binding protein, cytoplasmic and nuclear (768 aa).

Polar residues predominate over residues 1 to 11; that stretch reads MSAETATNPPV. The interval 1–52 is disordered; sequence MSAETATNPPVDTTPGAAPESATNGSNANVAADTTAGEASQTTSSTTPTAQP. Positions 39–52 are enriched in low complexity; sequence ASQTTSSTTPTAQP. 4 consecutive RRM domains span residues 55–133, 143–220, 236–314, and 340–470; these read ASLY…WSQR, GNVF…HHIA, TNVY…RAQK, and VNLY…LAQR. Disordered stretches follow at residues 374 to 428, 633 to 662, and 739 to 768; these read DFAP…EKKP, QQGMGRPGQAGRGQGAPAQAVGQRDENASP, and KNKGGDSGEPAADANKSKDASQETAEETKS. Over residues 637 to 646 the composition is skewed to gly residues; that stretch reads GRPGQAGRGQ. A PABC domain is found at 662-739; sequence PNGLTLQVLN…ALTVYDEYVK (78 aa). Basic and acidic residues predominate over residues 753-768; the sequence is NKSKDASQETAEETKS.

It belongs to the polyadenylate-binding protein type-1 family.

It is found in the cytoplasm. It localises to the nucleus. Functionally, binds the poly(A) tail of mRNA. Appears to be an important mediator of the multiple roles of the poly(A) tail in mRNA biogenesis, stability and translation. In the nucleus, involved in both mRNA cleavage and polyadenylation. Is also required for efficient mRNA export to the cytoplasm. Acts in concert with a poly(A)-specific nuclease (PAN) to affect poly(A) tail shortening, which may occur concomitantly with either nucleocytoplasmic mRNA transport or translational initiation. In the cytoplasm, stimulates translation initiation and regulates mRNA decay through translation termination-coupled poly(A) shortening, probably mediated by PAN. The protein is Polyadenylate-binding protein, cytoplasmic and nuclear (PAB1) of Coccidioides immitis (strain RS) (Valley fever fungus).